The chain runs to 1695 residues: Sialoadhesin (1695 aa).

The signal sequence occupies residues 1–19 (MCVLFSLLLLASVFSLGQT). One can recognise an Ig-like V-type domain in the interval 20–136 (TWGVSSPKNV…DVKGTTVTVT (117 aa)). The Extracellular segment spans residues 20-1639 (TWGVSSPKNV…ALHQLQLFQR (1620 aa)). Cystine bridges form between C36–C166, C41–C98, C160–C218, and C263–C306. Residues Y63, R116, and 122-126 (SNRWL) contribute to the N-acetylneuraminate site. Ig-like C2-type domains lie at 153 to 235 (GMER…YLQV), 239 to 321 (PKGV…SPLS), 326 to 406 (MAEV…SPLS), 416 to 508 (PDLT…LDFY), 509 to 594 (ANVA…TVLT), 602 to 701 (PTFT…ASFN), 704 to 781 (ATVL…AQLS), 795 to 890 (PKLS…FQVR), 894 to 973 (VQVS…APVS), 980 to 1079 (PRHV…ADFD), 1081 to 1161 (QAVR…RPVT), 1172 to 1264 (RLTY…MNPS), 1245 to 1337 (KANT…ASLQ), 1342 to 1439 (PRDA…RLLT), 1442 to 1520 (DIRV…ATTS), and 1534 to 1627 (PTLI…AYFG). N159 is a glycosylation site (N-linked (GlcNAc...) asparagine). Residues N266, N299, and N340 are each glycosylated (N-linked (GlcNAc...) asparagine). 2 disulfides stabilise this stretch: C347-C391 and C434-C492. Residue N500 is glycosylated (N-linked (GlcNAc...) asparagine). A disulfide bridge links C532 with C576. N583 carries N-linked (GlcNAc...) asparagine glycosylation. C625 and C685 are disulfide-bonded. 3 N-linked (GlcNAc...) asparagine glycosylation sites follow: N693, N722, and N737. Disulfide bonds link C725-C770 and C813-C872. The Cell attachment site motif lies at 827 to 829 (RGD). N882 is a glycosylation site (N-linked (GlcNAc...) asparagine). Disulfide bonds link C912/C956 and C1001/C1063. N1090 and N1100 each carry an N-linked (GlcNAc...) asparagine glycan. Intrachain disulfides connect C1103–C1145 and C1189–C1237. Residue N1247 is glycosylated (N-linked (GlcNAc...) asparagine). Intrachain disulfides connect C1277–C1320 and C1363–C1422. N-linked (GlcNAc...) asparagine glycosylation is found at N1460 and N1474. 2 disulfide bridges follow: C1463–C1509 and C1552–C1611. A helical transmembrane segment spans residues 1640–1660 (LLWVLGFLAGFLCLLLGLVAY). The Cytoplasmic portion of the chain corresponds to 1661 to 1695 (HTWRKKSSTKLNEDENSAEMATKKNTIQEEVVAAL).

This sequence belongs to the immunoglobulin superfamily. SIGLEC (sialic acid binding Ig-like lectin) family. As to quaternary structure, interacts with CLEC10A. As to expression, detected in lymph node in the subcapsular sinus, interfollicular regions, and T and B-cell boundary (at protein level). Expressed by macrophages in various tissues. Highest expression in spleen and lymph node with lower amounts in lung, liver, bone marrow, heart and skin. No expression in thymus, kidney, brain or small intestine.

It localises to the cell membrane. The protein resides in the secreted. Its function is as follows. Macrophage-restricted adhesion molecule that mediates sialic-acid dependent binding to lymphocytes, including granulocytes, monocytes, natural killer cells, B-cells and CD8 T-cells. Plays a crucial role in limiting bacterial dissemination by engaging sialylated bacteria to promote effective phagocytosis and antigen presentation for the adaptive immune response. Mediates the uptake of various enveloped viruses via sialic acid recognition and subsequently induces the formation of intracellular compartments filled with virions (VCCs). In turn, enhances macrophage-to-T-cell transmission of several viruses including murine leukemia virus. Acts as an endocytic receptor mediating clathrin dependent endocytosis. Preferentially binds to alpha-2,3-linked sialic acid. Binds to SPN/CD43 on T-cells. May play a role in hemopoiesis. Plays a role in the inhibition of antiviral innate immune by promoting TBK1 degradation via TYROBP and TRIM27-mediated ubiquitination. The chain is Sialoadhesin (Siglec1) from Mus musculus (Mouse).